We begin with the raw amino-acid sequence, 111 residues long: Universal stress protein B (111 aa).

2 helical membrane-spanning segments follow: residues M1 to R21 and F90 to W110.

The protein belongs to the universal stress protein B family.

It localises to the cell inner membrane. The sequence is that of Universal stress protein B from Escherichia coli O45:K1 (strain S88 / ExPEC).